The primary structure comprises 291 residues: Presqualene diphosphate synthase (291 aa).

Positions 1 to 23 (MTSAMKKIQPEAFSEKSSDSQAS) are disordered.

This sequence belongs to the phytoene/squalene synthase family. HpnD subfamily.

The catalysed reaction is 2 (2E,6E)-farnesyl diphosphate = presqualene diphosphate + diphosphate. It functions in the pathway secondary metabolite biosynthesis; hopanoid biosynthesis. Involved in the biosynthesis of the hopanoid precursor squalene (SQ) from farnesyl diphosphate (FPP). Catalyzes the first step, the formation of presqualene diphosphate (PSPP) from two molecules of FPP. This Zymomonas mobilis subsp. mobilis (strain ATCC 31821 / ZM4 / CP4) protein is Presqualene diphosphate synthase.